Consider the following 259-residue polypeptide: 14-3-3-like protein (259 aa).

It belongs to the 14-3-3 family.

This Helianthus annuus (Common sunflower) protein is 14-3-3-like protein.